A 702-amino-acid chain; its full sequence is Glucosidase 2 subunit beta (702 aa).

The signal sequence occupies residues 1 to 20; sequence MVSMFSLFLLLIEQSPLVAS. N-linked (GlcNAc...) asparagine glycosylation occurs at asparagine 145. Residues 163-228 adopt a coiled-coil conformation; the sequence is SYREGKEALE…LRGEYFNQLS (66 aa). Asparagine 240 and asparagine 358 each carry an N-linked (GlcNAc...) asparagine glycan. Residues 435–457 form a disordered region; that stretch reads PKVLPPDAVESEQDTNSDHIGTS. Positions 478–517 form a coiled coil; the sequence is KDLVSLEKRFRSCESQVSLLENELKQKMDYKKLLDETEDE. Residues asparagine 520 and asparagine 525 are each glycosylated (N-linked (GlcNAc...) asparagine). The 153-residue stretch at 537-689 folds into the MRH domain; sequence SYCLDDILDN…DVVGPLGCNK (153 aa). Intrachain disulfides connect cysteine 539–cysteine 552, cysteine 646–cysteine 675, and cysteine 660–cysteine 687. N-linked (GlcNAc...) asparagine glycosylation is found at asparagine 688 and asparagine 699.

Heterodimer of a catalytic subunit alpha (ROT2) and a subunit beta (GTB1).

It is found in the endoplasmic reticulum. Its function is as follows. Subunit of glucosidase 2, which cleaves sequentially the 2 innermost alpha-1,3-linked glucose residues from the Glc(2)Man(9)GlcNAc(2) oligosaccharide precursor of immature glycoproteins. Specifically required for the cleavage of the final glucose. This chain is Glucosidase 2 subunit beta (GTB1), found in Saccharomyces cerevisiae (strain ATCC 204508 / S288c) (Baker's yeast).